The chain runs to 511 residues: Zinc finger CCCH-type with G patch domain-containing protein (511 aa).

The C3H1-type zinc-finger motif lies at 157–180; the sequence is PCSYYLEGECRFDEARCRYSHGAL. Positions 254 to 281 are disordered; that stretch reads DQEDELTSEDSSSVNDGSSDEEESDMDD. The segment covering 271 to 281 has biased composition (acidic residues); the sequence is SSDEEESDMDD. The 47-residue stretch at 311 to 357 folds into the G-patch domain; it reads TRGIGSKLMEKMGYIHGTGLGSDGRGIVTPVSAQILPKGRSLDACME. 2 disordered regions span residues 409-433 and 478-511; these read GSDN…QHST and MHNQ…MFEF. The span at 414–425 shows a compositional bias: basic and acidic residues; it reads QQAEPEAKKAKA. Over residues 478–493 the composition is skewed to polar residues; that stretch reads MHNQKQELATLQAQER. The span at 494 to 511 shows a compositional bias: basic and acidic residues; the sequence is SLSKEQQTRKSKNKMFEF.

It localises to the nucleus. In terms of biological role, transcription repressor. The polypeptide is Zinc finger CCCH-type with G patch domain-containing protein (Drosophila ananassae (Fruit fly)).